The chain runs to 441 residues: 3-phosphoshikimate 1-carboxyvinyltransferase (441 aa).

Residues 1 to 10 are compositionally biased toward polar residues; it reads MSVTSTASSS. A disordered region spans residues 1–21; the sequence is MSVTSTASSSRELRAGGGLSG. Residues Lys29, Ser30, and Arg34 each coordinate 3-phosphoshikimate. Residue Lys29 participates in phosphoenolpyruvate binding. Phosphoenolpyruvate contacts are provided by Gly103 and Arg132. Residues Ser177, Gln179, Asp328, and Lys355 each contribute to the 3-phosphoshikimate site. Gln179 is a binding site for phosphoenolpyruvate. Asp328 acts as the Proton acceptor in catalysis. Arg359 and Arg401 together coordinate phosphoenolpyruvate.

It belongs to the EPSP synthase family. In terms of assembly, monomer.

Its subcellular location is the cytoplasm. It catalyses the reaction 3-phosphoshikimate + phosphoenolpyruvate = 5-O-(1-carboxyvinyl)-3-phosphoshikimate + phosphate. Its pathway is metabolic intermediate biosynthesis; chorismate biosynthesis; chorismate from D-erythrose 4-phosphate and phosphoenolpyruvate: step 6/7. Functionally, catalyzes the transfer of the enolpyruvyl moiety of phosphoenolpyruvate (PEP) to the 5-hydroxyl of shikimate-3-phosphate (S3P) to produce enolpyruvyl shikimate-3-phosphate and inorganic phosphate. The sequence is that of 3-phosphoshikimate 1-carboxyvinyltransferase from Prochlorococcus marinus (strain MIT 9303).